Here is a 937-residue protein sequence, read N- to C-terminus: MTDSKYFTTNKKGEIFELKAELNNEKKEKRKEAVKKVIAAMTVGKDVSSLFPDVVNCMQTDNLELKKLVYLYLMNYAKSQPDMAIMAVNSFVKDCEDPNPLIRALAVRTMGCIRVDKITEYLCEPLRKCLKDEDPYVRKTAAVCVAKLHDINAQMVEDQGFLDSLRDLIADSNPMVVANAVAALSEISESHPNSNLLDLNPQNINKLLTALNECTEWGQIFILDCLSNYNPKDDREAQSICERVTPRLSHANSAVVLSAVKVLMKFLELLPKDSDYYNMLLKKLAPPLVTLLSGEPEVQYVALRNINLIVQKRPEILKQEIKVFFVKYNDPIYVKLEKLDIMIRLASQANIAQVLAELKEYATEVDVDFVRKAVRAIGRCAIKVEQSAERCVSTLLDLIQTKVNYVVQEAIVVIRDIFRKYPNKYESIIATLCENLDSLDEPDARAAMIWIVGEYAERIDNADELLESFLEGFHDESTQVQLTLLTAIVKLFLKKPSETQELVQQVLSLATQDSDNPDLRDRGYIYWRLLSTDPVTAKEVVLSEKPLISEETDLIEPTLLDELICHIGSLASVYHKPPNAFVEGSHGIHRKHLPIHHGSTDAGDSPVGTTTTTNLEQPQVIPSQGDLLGDLLNLDLGPPVNVPQVSSMQMGAVDLLGGGLDSLVGQSFIPSSVPATFAPSPTPAVVSSGLNDLFELSTGIGMAPGGYVAPKAVWLPAVKAKGLEISGTFTHRQGHIYMEMNFTNKALQHMTDFAIQFNKNSFGVIPSTPLAIHTPLMPNQSIDVSLPLNTLGPVMKMEPLNNLQVAVKNNIDVFYFSCLIPLNVLFVEDGKMERQVFLATWKDIPNENELQFQIKECHLNADTVSSKLQNNNVYTIAKRNVEGQDMLYQSLKLTNGIWILAELRIQPGNPNYTLSLKCRAPEVSQYIYQVYDSILKN.

T2 bears the N-acetylthreonine mark. S4 is subject to Phosphoserine. Position 265 is an N6-acetyllysine (K265). Positions 593 to 617 (LPIHHGSTDAGDSPVGTTTTTNLEQ) are disordered. Positions 607 to 617 (VGTTTTTNLEQ) are enriched in polar residues. Phosphotyrosine is present on residues Y737 and Y928.

This sequence belongs to the adaptor complexes large subunit family. In terms of assembly, adaptor protein complex 2 (AP-2) is a heterotetramer composed of two large adaptins (alpha-type subunit AP2A1 or AP2A2 and beta-type subunit AP2B1), a medium adaptin (mu-type subunit AP2M1) and a small adaptin (sigma-type subunit AP2S1). Interacts with EPN1. Interacts with EPS15; clathrin competes with EPS15. Interacts with SNAP91; clathrin competes with SNAP91. Interacts with CLTC; clathrin competes with EPS15, SNAP91 and PIP5K1C. Interacts with LDLRAP1. Interacts with AMPH and BIN1. Interacts with ARF6 (GDP-bound). Interacts (dephosphorylated at Tyr-737) with ARRB1; phosphorylation of AP2B1 at Tyr-737 disrupts the interaction. Interacts with SLC2A8. Interacts with SCYL1 and SCYL2. Interacts with TGFBR1 and TGFBR2. Interacts with PIP5K1C; clathrin competes with PIP5K1C. Interacts with DENND1B. Interacts with FCHO1. Interacts with RFTN1. Interacts with KIAA1107. Together with AP2A1 or AP2A2 and AP2M1, it interacts with ADAM10; this interaction facilitates ADAM10 endocytosis from the plasma membrane during long-term potentiation in hippocampal neurons. In terms of tissue distribution, expressed in the brain (at protein level).

It is found in the cell membrane. The protein resides in the membrane. The protein localises to the coated pit. Its function is as follows. Component of the adaptor protein complex 2 (AP-2). Adaptor protein complexes function in protein transport via transport vesicles in different membrane traffic pathways. Adaptor protein complexes are vesicle coat components and appear to be involved in cargo selection and vesicle formation. AP-2 is involved in clathrin-dependent endocytosis in which cargo proteins are incorporated into vesicles surrounded by clathrin (clathrin-coated vesicles, CCVs) which are destined for fusion with the early endosome. The clathrin lattice serves as a mechanical scaffold but is itself unable to bind directly to membrane components. Clathrin-associated adaptor protein (AP) complexes which can bind directly to both the clathrin lattice and to the lipid and protein components of membranes are considered to be the major clathrin adaptors contributing the CCV formation. AP-2 also serves as a cargo receptor to selectively sort the membrane proteins involved in receptor-mediated endocytosis. AP-2 seems to play a role in the recycling of synaptic vesicle membranes from the presynaptic surface. AP-2 recognizes Y-X-X-[FILMV] (Y-X-X-Phi) and [ED]-X-X-X-L-[LI] endocytosis signal motifs within the cytosolic tails of transmembrane cargo molecules. AP-2 may also play a role in maintaining normal post-endocytic trafficking through the ARF6-regulated, non-clathrin pathway. During long-term potentiation in hippocampal neurons, AP-2 is responsible for the endocytosis of ADAM10. The AP-2 beta subunit acts via its C-terminal appendage domain as a scaffolding platform for endocytic accessory proteins; at least some clathrin-associated sorting proteins (CLASPs) are recognized by their [DE]-X(1,2)-F-X-X-[FL]-X-X-X-R motif. The AP-2 beta subunit binds to clathrin heavy chain, promoting clathrin lattice assembly; clathrin displaces at least some CLASPs from AP2B1 which probably then can be positioned for further coat assembly. The polypeptide is AP-2 complex subunit beta (Ap2b1) (Mus musculus (Mouse)).